The following is an 835-amino-acid chain: Serine/threonine-protein kinase TNNI3K (835 aa).

The N-myristoyl glycine moiety is linked to residue G2. Residues 21-50 adopt a coiled-coil conformation; the sequence is SESYAIIIERLEDNLQIKENEFQELRHIFG. ANK repeat units follow at residues 66–96, 100–129, 133–162, 166–195, 199–228, 234–263, 269–298, 304–335, 339–368, and 381–410; these read RGLS…RPSR, NGFP…DVQQ, GGLT…NVNV, VFFT…DVNV, VGDR…KADV, EDHV…EVQP, YGDT…TESL, FSET…NINH, DGHT…DMNL, and DEQT…PQEE. The Protein kinase domain maps to 463 to 723; sequence IEFHEIIGSG…EVVSKLEECL (261 aa). ATP contacts are provided by residues 469–477 and K490; that span reads IGSGSFGKV. D588 serves as the catalytic Proton acceptor.

The protein belongs to the protein kinase superfamily. TKL Ser/Thr protein kinase family. MAP kinase kinase kinase subfamily. Interacts with TNNI3, ACTC, ACTA1, MYBPC3, AIP, FABP3 and HADHB. Requires Mg(2+) as cofactor. Autophosphorylated.

It localises to the nucleus. The protein resides in the cytoplasm. It carries out the reaction L-seryl-[protein] + ATP = O-phospho-L-seryl-[protein] + ADP + H(+). The enzyme catalyses L-threonyl-[protein] + ATP = O-phospho-L-threonyl-[protein] + ADP + H(+). May play a role in cardiac physiology. The sequence is that of Serine/threonine-protein kinase TNNI3K from Rattus norvegicus (Rat).